The primary structure comprises 73 residues: Small ribosomal subunit protein bS18c (73 aa).

This sequence belongs to the bacterial ribosomal protein bS18 family. In terms of assembly, part of the 30S ribosomal subunit.

It is found in the plastid. It localises to the chloroplast. This Guillardia theta (Cryptophyte) protein is Small ribosomal subunit protein bS18c (rps18).